A 91-amino-acid polypeptide reads, in one-letter code: Ragulator complex protein LAMTOR5 homolog (91 aa).

The protein belongs to the LAMTOR5 family. As to quaternary structure, part of the Ragulator complex.

Its subcellular location is the cytoplasm. It is found in the lysosome. Its function is as follows. Regulator of the TOR pathway, a signaling cascade that promotes cell growth in response to growth factors, energy levels, and amino acids. As part of the Ragulator complex, may activate the TOR signaling cascade in response to amino acids. In Nematostella vectensis (Starlet sea anemone), this protein is Ragulator complex protein LAMTOR5 homolog.